The chain runs to 132 residues: Protein LH2 (132 aa).

This Pantherophis guttatus (Corn snake) protein is Protein LH2.